Reading from the N-terminus, the 62-residue chain is U10-buthitoxin-Hj1a (62 aa).

The signal sequence occupies residues 1 to 22; it reads MQKIFIILVLFCILKFNVDVEG. 3 disulfides stabilise this stretch: cysteine 28/cysteine 46, cysteine 33/cysteine 59, and cysteine 37/cysteine 61.

The protein belongs to the short scorpion toxin superfamily. Potassium channel inhibitor family. Alpha-KTx 23 subfamily. In terms of tissue distribution, expressed by the venom gland.

The protein localises to the secreted. In terms of biological role, may block potassium channels. This is U10-buthitoxin-Hj1a from Hottentotta judaicus (Black scorpion).